The following is a 570-amino-acid chain: Urease subunit alpha (570 aa).

The Urease domain occupies 131 to 570; the sequence is GGIDSHIHFI…LPMTQRYFLF (440 aa). Residues H136, H138, and K219 each coordinate Ni(2+). N6-carboxylysine is present on K219. Substrate is bound at residue H221. Ni(2+) is bound by residues H248 and H274. Residue H322 is the Proton donor of the active site. D362 is a Ni(2+) binding site.

Belongs to the metallo-dependent hydrolases superfamily. Urease alpha subunit family. Heterotrimer of UreA (gamma), UreB (beta) and UreC (alpha) subunits. Three heterotrimers associate to form the active enzyme. Ni cation is required as a cofactor. Carboxylation allows a single lysine to coordinate two nickel ions.

The protein localises to the cytoplasm. The catalysed reaction is urea + 2 H2O + H(+) = hydrogencarbonate + 2 NH4(+). It participates in nitrogen metabolism; urea degradation; CO(2) and NH(3) from urea (urease route): step 1/1. In Trichodesmium erythraeum (strain IMS101), this protein is Urease subunit alpha.